The following is a 278-amino-acid chain: MGIRKYKPTTPGRRGASVSDFAEITRSTPEKSLVRPLHGKGGRNAHGRITTRHKGGGHKRAYRVIDFRRHDKDGVNAKVAHIEYDPNRTANIALLHYLDGEKRYIIAPQGLKQGDVIESGANADIKPGNNLPLRNIPAGTVIHAVELRPGGGAKLARSAGVSIQLLGKEGTYAALRMPSGEIRRVDVRCRATVGEVGNAEQSNINWGKAGRMRWKGKRPTVRGVVMNPVDHPHGGGEGKTSGGRHPVSPWGKPEGRTRKPNKPSDKLIVRRRRTGKKR.

Disordered stretches follow at residues 1–20, 25–58, and 223–278; these read MGIR…SVSD, TRST…GGGH, and GVVM…GKKR. Residues 37–58 show a composition bias toward basic residues; sequence LHGKGGRNAHGRITTRHKGGGH. Basic and acidic residues predominate over residues 253-268; the sequence is PEGRTRKPNKPSDKLI. Basic residues predominate over residues 269-278; the sequence is VRRRRTGKKR.

Belongs to the universal ribosomal protein uL2 family. In terms of assembly, part of the 50S ribosomal subunit. Forms a bridge to the 30S subunit in the 70S ribosome.

Functionally, one of the primary rRNA binding proteins. Required for association of the 30S and 50S subunits to form the 70S ribosome, for tRNA binding and peptide bond formation. It has been suggested to have peptidyltransferase activity; this is somewhat controversial. Makes several contacts with the 16S rRNA in the 70S ribosome. This Mycolicibacterium smegmatis (strain ATCC 700084 / mc(2)155) (Mycobacterium smegmatis) protein is Large ribosomal subunit protein uL2.